The primary structure comprises 95 residues: Co-chaperonin GroES (95 aa).

It belongs to the GroES chaperonin family. Heptamer of 7 subunits arranged in a ring. Interacts with the chaperonin GroEL.

It is found in the cytoplasm. Its function is as follows. Together with the chaperonin GroEL, plays an essential role in assisting protein folding. The GroEL-GroES system forms a nano-cage that allows encapsulation of the non-native substrate proteins and provides a physical environment optimized to promote and accelerate protein folding. GroES binds to the apical surface of the GroEL ring, thereby capping the opening of the GroEL channel. This is Co-chaperonin GroES from Staphylococcus haemolyticus (strain JCSC1435).